A 177-amino-acid polypeptide reads, in one-letter code: Bifunctional protein PyrR (177 aa).

The short motif at 99-111 is the PRPP-binding element; it reads VVLVDDVIYKGRT.

The protein belongs to the purine/pyrimidine phosphoribosyltransferase family. PyrR subfamily.

It carries out the reaction UMP + diphosphate = 5-phospho-alpha-D-ribose 1-diphosphate + uracil. Regulates the transcription of the pyrimidine nucleotide (pyr) operon in response to exogenous pyrimidines. In terms of biological role, also displays a weak uracil phosphoribosyltransferase activity which is not physiologically significant. This is Bifunctional protein PyrR from Gloeothece citriformis (strain PCC 7424) (Cyanothece sp. (strain PCC 7424)).